The primary structure comprises 629 residues: tRNA uridine 5-carboxymethylaminomethyl modification enzyme MnmG (629 aa).

Residues 13–18, Val-125, and Ser-180 each bind FAD; that span reads GGGHAG. 273 to 287 is an NAD(+) binding site; that stretch reads GPRYCPSIEDKVMRF. Residue Gln-370 coordinates FAD.

This sequence belongs to the MnmG family. In terms of assembly, homodimer. Heterotetramer of two MnmE and two MnmG subunits. It depends on FAD as a cofactor.

It is found in the cytoplasm. Functionally, NAD-binding protein involved in the addition of a carboxymethylaminomethyl (cmnm) group at the wobble position (U34) of certain tRNAs, forming tRNA-cmnm(5)s(2)U34. The protein is tRNA uridine 5-carboxymethylaminomethyl modification enzyme MnmG of Photobacterium profundum (strain SS9).